The chain runs to 486 residues: Matrilin-3 (486 aa).

An N-terminal signal peptide occupies residues 1 to 28 (MPRPAPARRLPGLLLLLWPLLLLPSAAP). The interval 32–75 (ARPGFRRLETRGPGGSPGRRPSPAAPDGAPASGTSEPGRARGAG) is disordered. A compositionally biased stretch (low complexity) spans 49–64 (GRRPSPAAPDGAPASG). The region spanning 83–258 (DLVFIIDSSR…GVIEKLSSRF (176 aa)) is the VWFA domain. Arg-198 carries the post-translational modification Omega-N-methylarginine. 4 EGF-like domains span residues 264-305 (ALDP…KTCS), 306-347 (ALDR…KTCS), 348-389 (AQDK…KTCS), and 390-431 (VRDK…KTCS). 12 disulfide bridges follow: Cys-268/Cys-279, Cys-275/Cys-289, Cys-291/Cys-304, Cys-310/Cys-321, Cys-317/Cys-331, Cys-333/Cys-346, Cys-352/Cys-363, Cys-359/Cys-373, Cys-375/Cys-388, Cys-394/Cys-405, Cys-401/Cys-415, and Cys-417/Cys-430. Ser-441 is subject to Phosphoserine; by FAM20C. Residue Thr-442 is modified to Phosphothreonine; by FAM20C. Positions 456-480 (DKVSSYLQRLNTKLDDILEKLKINE) form a coiled coil.

In terms of assembly, can form homooligomers (monomers, dimers, trimers and tetramers) and heterooligomers with matrilin-1. Interacts with COMP. Component of a complex containing at least CRELD2, MANF, MATN3 and PDIA4. As to expression, expressed only in cartilaginous tissues, such as vertebrae, ribs and shoulders.

The protein resides in the secreted. Its function is as follows. Major component of the extracellular matrix of cartilage and may play a role in the formation of extracellular filamentous networks. The chain is Matrilin-3 (MATN3) from Homo sapiens (Human).